The chain runs to 381 residues: MSQFFEAATPVAIPTNNTNGGSSDAGSAATGGAPVVGTTAQPTINHRLLLSLKEAAKIIGTKGSTISRIRAANAVKIGISEKVPGCSDRILSCAGNVINVANAIGDIVDVLNKRNPENEDAAEGEAEEHYYFHFLNHILPAPSKDEIRDLQQLEDIGYVRLIVANSHISSIIGKAGATIKSLINKHGVKIVASKDFLPASDERIIEIQGFPGSITNVLIEISEIILSDVDVRFSTERSYFPHLKKSSGEPTSPSTSSNTRIELKIPELYVGAIIGRGMNRIKNLKTFTKTNIVVERKDDDDKDENFRKFIITSKFPKNVKLAESMLLKNLNTEIEKRENYKRKLEAAEGDATVVTERSDSASFLEEKEEPQENHDNKEEQS.

The interval 1-34 (MSQFFEAATPVAIPTNNTNGGSSDAGSAATGGAP) is disordered. Low complexity predominate over residues 15–33 (TNNTNGGSSDAGSAATGGA). KH domains follow at residues 43 to 107 (TINH…IGDI), 156 to 221 (IGYV…LIEI), and 258 to 326 (NTRI…ESML). Residues 344-381 (LEAAEGDATVVTERSDSASFLEEKEEPQENHDNKEEQS) form a disordered region. A phosphoserine mark is found at S358, S360, and S362. The span at 370–381 (PQENHDNKEEQS) shows a compositional bias: basic and acidic residues.

Belongs to the HEK2 family. Binds RNA. Phosphorylated by the plasma membrane-Anchored casein kinase YCK1. Phosphorylation at its C-terminus reduces its RNA-binding capacity.

Its subcellular location is the cytoplasm. It localises to the P-body. The protein resides in the nucleus. It is found in the chromosome. The protein localises to the telomere. Functionally, RNA-binding protein involved in the correct localization of transcripts in the cell. RNA localization is a widespread mechanism for achieving localized protein synthesis. Required for the asymmetric localization to the daughter cell nucleus of the ASH1 transcript, coding for a specific repressor of transcription. Overexpression inhibits translation of the ASH1 transcript. Involved in the stability of transcripts, like the MTL1 mRNA. Involved in structural and functional organization of telomeric chromatin and regulates silencing at the HMR locus. The polypeptide is Heterogeneous nuclear rnp K-like protein 2 (HEK2) (Saccharomyces cerevisiae (strain YJM789) (Baker's yeast)).